The chain runs to 193 residues: Large ribosomal subunit protein bL12cy (193 aa).

The N-terminal 59 residues, 1 to 59, are a transit peptide targeting the chloroplast; it reads MAATTLSIATTIRSSSFSSGLASAHHFPSRPLSIEFPFSFGVSSSSTLSHRAIYLHPIS. The span at 170–187 shows a compositional bias: basic and acidic residues; the sequence is GVTKDEAEEDKTQLEEAG. Residues 170–193 form a disordered region; it reads GVTKDEAEEDKTQLEEAGAKVSIV.

The protein belongs to the bacterial ribosomal protein bL12 family.

It localises to the plastid. It is found in the chloroplast. The chain is Large ribosomal subunit protein bL12cy (RPL12B) from Arabidopsis thaliana (Mouse-ear cress).